The sequence spans 1379 residues: DNA-directed RNA polymerase subunit beta'' (1379 aa).

4 residues coordinate Zn(2+): cysteine 224, cysteine 295, cysteine 302, and cysteine 305. Residues 503–524 form a disordered region; sequence SVQSLSVKRRSTSKLSETNDEA.

Belongs to the RNA polymerase beta' chain family. RpoC2 subfamily. In terms of assembly, in plastids the minimal PEP RNA polymerase catalytic core is composed of four subunits: alpha, beta, beta', and beta''. When a (nuclear-encoded) sigma factor is associated with the core the holoenzyme is formed, which can initiate transcription. Requires Zn(2+) as cofactor.

The protein localises to the plastid. It catalyses the reaction RNA(n) + a ribonucleoside 5'-triphosphate = RNA(n+1) + diphosphate. DNA-dependent RNA polymerase catalyzes the transcription of DNA into RNA using the four ribonucleoside triphosphates as substrates. The protein is DNA-directed RNA polymerase subunit beta'' of Cuscuta exaltata (Tall dodder).